A 462-amino-acid chain; its full sequence is EPD1-interacting receptor-like cytoplasmic serine/threonine-protein kinase 5A (462 aa).

Residues 85–366 form the Protein kinase domain; sequence FSSANFLGEG…DVVNILEPLL (282 aa). ATP-binding positions include 91 to 99 and K120; that span reads LGEGGFGPV. Phosphotyrosine is present on residues Y165 and Y167. Catalysis depends on D215, which acts as the Proton acceptor.

The protein belongs to the protein kinase superfamily. Ser/Thr protein kinase family. As to quaternary structure, interacts with the Verticillium dahliae elicitor EPD1 (AC G2WWH6). In terms of processing, phosphorylated at Tyr-165 and Tyr-167 in the presence of pathogen-associated molecular patterns (PAMPs); this triggers the expression of pathogenesis-related genes (e.g. PR5 and PR16). In terms of tissue distribution, mostly expressed in roots and, to a lesser extent, in leaves.

It localises to the cell membrane. It carries out the reaction L-seryl-[protein] + ATP = O-phospho-L-seryl-[protein] + ADP + H(+). The catalysed reaction is L-threonyl-[protein] + ATP = O-phospho-L-threonyl-[protein] + ADP + H(+). Its function is as follows. Required for pathogen-associated molecular pattern (PAMP, e.g. chitin and flg22)-triggered immunity (PTI) involving reactive oxygen species (ROS) accumulation and triggering plant defense, including defense-related gene expression (e.g. PR1 and LOX). Ensures specific recognition of the EPD1 effector of Verticillium dahliae, resulting in a hypersensitive response known as effector-triggered immunity (ETI), characterized by the activation of programmed cell death to limit infection by the pathogen. Priming plants with the incompatible pathogen V.dahliae leads to an increased resistance to compatible pathogens, as a result of systemic acquired resistance (SAR). The chain is EPD1-interacting receptor-like cytoplasmic serine/threonine-protein kinase 5A from Gossypium barbadense (Sea Island cotton).